A 276-amino-acid polypeptide reads, in one-letter code: Undecaprenyl-diphosphatase (276 aa).

A run of 8 helical transmembrane segments spans residues 6-26 (IEIL…WLPI), 49-69 (EMFF…MFWN), 89-109 (FSLW…GILF), 117-137 (LHTP…FIVI), 151-171 (LADI…LSLI), 181-201 (IIGA…TFFL), 224-244 (AELL…VFVI), and 256-276 (FKVF…ITAI).

It belongs to the UppP family.

Its subcellular location is the cell membrane. It catalyses the reaction di-trans,octa-cis-undecaprenyl diphosphate + H2O = di-trans,octa-cis-undecaprenyl phosphate + phosphate + H(+). Catalyzes the dephosphorylation of undecaprenyl diphosphate (UPP). Confers resistance to bacitracin. In Enterococcus faecalis (Streptococcus faecalis), this protein is Undecaprenyl-diphosphatase.